The primary structure comprises 153 residues: Probable Brix domain-containing ribosomal biogenesis protein (153 aa).

Positions 1–153 (MQVLTTSRKP…RILKISRSSR (153 aa)) constitute a Brix domain.

Functionally, probably involved in the biogenesis of the ribosome. The sequence is that of Probable Brix domain-containing ribosomal biogenesis protein from Archaeoglobus fulgidus (strain ATCC 49558 / DSM 4304 / JCM 9628 / NBRC 100126 / VC-16).